A 974-amino-acid chain; its full sequence is Pentatricopeptide repeat-containing protein At5g61990, mitochondrial (974 aa).

The N-terminal 31 residues, 1-31, are a transit peptide targeting the mitochondrion; the sequence is MMGSMLFRKRTLVTRANFLLFRSFSVNVEKL. PPR repeat units follow at residues 96–130, 150–184, 185–219, 220–250, 257–275, 276–310, 311–345, 346–380, 381–415, 416–450, 451–485, 486–520, 521–555, 556–590, 591–625, 626–660, 661–695, 696–730, 731–761, 765–799, 804–838, 839–873, 874–908, and 914–948; these read KLDSFSFLALDLCNFGSFEKALSVVERMIERNWPV, DGVLFGILFDGYIAKGYIEEAVFVFSSSMGLELVP, RLSRCKVLLDALLRWNRLDLFWDVYKGMVERNVVF, DVKTYHMLIIAHCRAGNVQLGKDVLFKTEKE, NVDGALKLKESMICKGLVP, LKYTYDVLIDGLCKIKRLEDAKSLLVEMDSLGVSL, DNHTYSLLIDGLLKGRNADAAKGLVHEMVSHGINI, KPYMYDCCICVMSKEGVMEKAKALFDGMIASGLIP, QAQAYASLIEGYCREKNVRQGYELLVEMKKRNIVI, SPYTYGTVVKGMCSSGDLDGAYNIVKEMIASGCRP, NVVIYTTLIKTFLQNSRFGDAMRVLKEMKEQGIAP, DIFCYNSLIIGLSKAKRMDEARSFLVEMVENGLKP, NAFTYGAFISGYIEASEFASADKYVKEMRECGVLP, NKVLCTGLINEYCKKGKVIEACSAYRSMVDQGILG, DAKTYTVLMNGLFKNDKVDDAEEIFREMRGKGIAP, DVFSYGVLINGFSKLGNMQKASSIFDEMVEEGLTP, NVIIYNMLLGGFCRSGEIEKAKELLDEMSVKGLHP, NAVTYCTIIDGYCKSGDLAEAFRLFDEMKLKGLVP, DSFVYTTLVDGCCRLNDVERAITIFGTNKKG, STAPFNALINWVFKFGKTELKTEVLNRLMDGSFDR, NDVTYNIMIDYLCKEGNLEAAKELFHQMQNANLMP, TVITYTSLLNGYDKMGRRAEMFPVFDEAIAAGIEP, DHIMYSVIINAFLKEGMTTKALVLVDQMFAKNAVD, and SISTCRALLSGFAKVGEMEVAEKVMENMVRLQYIP.

This sequence belongs to the PPR family. P subfamily.

Its subcellular location is the mitochondrion. The chain is Pentatricopeptide repeat-containing protein At5g61990, mitochondrial from Arabidopsis thaliana (Mouse-ear cress).